The primary structure comprises 26 residues: Protein YsdD (26 aa).

The tract at residues 1–26 (MTIDKNWLNRSNKDPGRSLRFTHQPV) is disordered.

This is Protein YsdD from Escherichia coli (strain K12).